The primary structure comprises 88 residues: Small ribosomal subunit protein uS15 (88 aa).

This sequence belongs to the universal ribosomal protein uS15 family. Part of the 30S ribosomal subunit. Forms a bridge to the 50S subunit in the 70S ribosome, contacting the 23S rRNA.

Its function is as follows. One of the primary rRNA binding proteins, it binds directly to 16S rRNA where it helps nucleate assembly of the platform of the 30S subunit by binding and bridging several RNA helices of the 16S rRNA. Forms an intersubunit bridge (bridge B4) with the 23S rRNA of the 50S subunit in the ribosome. The protein is Small ribosomal subunit protein uS15 of Hydrogenovibrio crunogenus (strain DSM 25203 / XCL-2) (Thiomicrospira crunogena).